Here is a 380-residue protein sequence, read N- to C-terminus: MASLRKTHPILKIANSALVDLPAPSNISVWWNFGSLLGLCLITQLLTGLFLAMHYTSDIETAFSSVVHICRDVNYGWLIRNMHANGASFFFICLYMHIARGLYYGSYLFVETWNIGVVLFLLVMMTSFVGYVLPWGQMSFWGATVITNLMSTVPYVGDALVQWIWGGFSVDNATLTRFFAFHFLFPFVVAAFTMLHLLFLHETGSNNPTGINSNADKIPFHPYFTYKDLLGFAVMLLGLTALALFAPNLLGDPDNFTPANPIVTPPHVKPEWYFLFAYAILRSIPNKLGGVLALLFSILVLMVVPFLHTSKQRGLTFRPLTQMLFWVLVADMLVLTWIGGVPVEHPFIIIGQVASVLYFSLFLVLFPLAGMTENKALEWN.

The next 4 helical transmembrane spans lie at 33–53, 77–98, 113–133, and 178–198; these read FGSLLGLCLITQLLTGLFLAM, WLIRNMHANGASFFFICLYMHI, WNIGVVLFLLVMMTSFVGYVL, and FFAFHFLFPFVVAAFTMLHLL. Residues His-83 and His-97 each contribute to the heme b site. The heme b site is built by His-182 and His-196. His-201 provides a ligand contact to a ubiquinone. The next 4 helical transmembrane spans lie at 226–246, 288–308, 320–340, and 347–367; these read YKDLLGFAVMLLGLTALALFA, LGGVLALLFSILVLMVVPFLH, LTQMLFWVLVADMLVLTWIGG, and FIIIGQVASVLYFSLFLVLFP.

This sequence belongs to the cytochrome b family. In terms of assembly, the cytochrome bc1 complex contains 3 respiratory subunits (MT-CYB, CYC1 and UQCRFS1), 2 core proteins (UQCRC1 and UQCRC2) and probably 6 low-molecular weight proteins. It depends on heme b as a cofactor.

Its subcellular location is the mitochondrion inner membrane. In terms of biological role, component of the ubiquinol-cytochrome c reductase complex (complex III or cytochrome b-c1 complex) that is part of the mitochondrial respiratory chain. The b-c1 complex mediates electron transfer from ubiquinol to cytochrome c. Contributes to the generation of a proton gradient across the mitochondrial membrane that is then used for ATP synthesis. This Gadus morhua (Atlantic cod) protein is Cytochrome b (mt-cyb).